Reading from the N-terminus, the 286-residue chain is Pre-mRNA-processing protein 45 (286 aa).

2 disordered regions span residues 111–146 and 253–286; these read TNDI…SSSK and KQRN…RRRY. Positions 132–145 are enriched in low complexity; the sequence is PNQEQQQQSSSSSS. Residues 253-279 show a composition bias toward basic and acidic residues; that stretch reads KQRNEIRQQKQLQEKRLRDEKIKEIAN.

This sequence belongs to the SNW family. As to quaternary structure, associated with the spliceosome.

The protein localises to the nucleus. Its function is as follows. Involved in pre-mRNA splicing. This chain is Pre-mRNA-processing protein 45 (PRP45), found in Candida albicans (strain SC5314 / ATCC MYA-2876) (Yeast).